The primary structure comprises 185 residues: Peptidyl-tRNA hydrolase (185 aa).

Tyr14 provides a ligand contact to tRNA. His19 serves as the catalytic Proton acceptor. TRNA-binding residues include Phe64, Asn66, and Asn112.

This sequence belongs to the PTH family. Monomer.

The protein localises to the cytoplasm. It catalyses the reaction an N-acyl-L-alpha-aminoacyl-tRNA + H2O = an N-acyl-L-amino acid + a tRNA + H(+). Its function is as follows. Hydrolyzes ribosome-free peptidyl-tRNAs (with 1 or more amino acids incorporated), which drop off the ribosome during protein synthesis, or as a result of ribosome stalling. Functionally, catalyzes the release of premature peptidyl moieties from peptidyl-tRNA molecules trapped in stalled 50S ribosomal subunits, and thus maintains levels of free tRNAs and 50S ribosomes. This Lacticaseibacillus casei (strain BL23) (Lactobacillus casei) protein is Peptidyl-tRNA hydrolase.